A 261-amino-acid polypeptide reads, in one-letter code: Glandular kallikrein-7, submandibular/renal (261 aa).

The first 18 residues, 1–18 (MWFLILFLDLSLGQIDAA), serve as a signal peptide directing secretion. The propeptide at 19–24 (PPGQSR) is activation peptide. Positions 25 to 258 (VIGGYKCEKN…FTSWIKEVMK (234 aa)) constitute a Peptidase S1 domain. Disulfide bonds link C31-C173, C50-C66, C152-C219, C184-C198, and C209-C234. H65 serves as the catalytic Charge relay system. N-linked (GlcNAc...) asparagine glycosylation is present at N108. D120 serves as the catalytic Charge relay system. S213 serves as the catalytic Charge relay system.

Belongs to the peptidase S1 family. Kallikrein subfamily. In terms of tissue distribution, kidney and submandibular gland. Not expressed in liver, pancreas, spleen, parotid, testis, cortex, prostate, ovary and pituitary.

The enzyme catalyses Preferential cleavage of Arg-|-Xaa bonds in small molecule substrates. Highly selective action to release kallidin (lysyl-bradykinin) from kininogen involves hydrolysis of Met-|-Xaa or Leu-|-Xaa.. Its function is as follows. Glandular kallikreins cleave Met-Lys and Arg-Ser bonds in kininogen to release Lys-bradykinin. Predominant kallikrein protein in the kidney. This Rattus norvegicus (Rat) protein is Glandular kallikrein-7, submandibular/renal (Klk7).